The chain runs to 362 residues: Serine/threonine-protein kinase-like protein At3g51990 (362 aa).

The first 24 residues, 1 to 24 (MGYLSCKAGSAVAIAVSSAASTSG), serve as a signal peptide directing secretion. Positions 21-32 (STSGSTSSKASA) are enriched in low complexity. Positions 21 to 43 (STSGSTSSKASAPPESPIEDRPR) are disordered. The 271-residue stretch at 59–329 (FDINNLLGRG…PGMEEVVGWL (271 aa)) folds into the Protein kinase domain. Residues 65–73 (LGRGSHGSV) and Lys-86 each bind ATP. Asn-136 carries an N-linked (GlcNAc...) asparagine glycan. Asp-185 serves as the catalytic Proton acceptor. Ser-219 is subject to Phosphoserine. Phosphothreonine is present on residues Thr-220 and Thr-225. A Phosphotyrosine modification is found at Tyr-233.

Belongs to the protein kinase superfamily. Ser/Thr protein kinase family.

It is found in the secreted. The enzyme catalyses L-seryl-[protein] + ATP = O-phospho-L-seryl-[protein] + ADP + H(+). It carries out the reaction L-threonyl-[protein] + ATP = O-phospho-L-threonyl-[protein] + ADP + H(+). In Arabidopsis thaliana (Mouse-ear cress), this protein is Serine/threonine-protein kinase-like protein At3g51990.